The sequence spans 166 residues: Small ribosomal subunit protein uS5 (166 aa).

Residues 11 to 74 form the S5 DRBM domain; it reads FLEKLIAVNR…EKARRNMVDV (64 aa).

It belongs to the universal ribosomal protein uS5 family. As to quaternary structure, part of the 30S ribosomal subunit. Contacts proteins S4 and S8.

In terms of biological role, with S4 and S12 plays an important role in translational accuracy. Functionally, located at the back of the 30S subunit body where it stabilizes the conformation of the head with respect to the body. The sequence is that of Small ribosomal subunit protein uS5 from Alteromonas mediterranea (strain DSM 17117 / CIP 110805 / LMG 28347 / Deep ecotype).